A 302-amino-acid chain; its full sequence is D-alanine--D-alanine ligase (302 aa).

One can recognise an ATP-grasp domain in the interval 104–296 (KLVFERFAIP…FPDLVTWLVE (193 aa)). Residue 130–183 (AMARPYVVKPLDQGSSVGVTIVTSETNDLPFSRDDWPYGRQVMVERFIPGRELT) coordinates ATP. Residues D251, E263, and N265 each coordinate Mg(2+).

The protein belongs to the D-alanine--D-alanine ligase family. The cofactor is Mg(2+). Mn(2+) is required as a cofactor.

The protein resides in the cytoplasm. It carries out the reaction 2 D-alanine + ATP = D-alanyl-D-alanine + ADP + phosphate + H(+). It participates in cell wall biogenesis; peptidoglycan biosynthesis. Functionally, cell wall formation. This chain is D-alanine--D-alanine ligase, found in Rhodospirillum rubrum (strain ATCC 11170 / ATH 1.1.1 / DSM 467 / LMG 4362 / NCIMB 8255 / S1).